The primary structure comprises 205 residues: Disintegrin-like leberagin-C (205 aa).

The 87-residue stretch at 4-90 folds into the Disintegrin domain; it reads PPVCGNELLE…DCPIDRFHRN (87 aa). 9 cysteine pairs are disulfide-bonded: cysteine 7/cysteine 26, cysteine 18/cysteine 36, cysteine 62/cysteine 82, cysteine 69/cysteine 94, cysteine 101/cysteine 106, cysteine 113/cysteine 128, cysteine 151/cysteine 158, cysteine 163/cysteine 171, and cysteine 193/cysteine 198. The D/ECD-tripeptide signature appears at 68 to 70; it reads ECD. The N-linked (GlcNAc...) asparagine glycan is linked to asparagine 120.

This sequence belongs to the venom metalloproteinase (M12B) family. P-III subfamily. P-IIIb sub-subfamily. Monomer. In terms of tissue distribution, expressed by the venom gland.

It localises to the secreted. Functionally, inhibits platelet aggregation induced by thrombin and arachidonic acid with IC(50) of 40 and 50 nM respectively (in rabbit platetelet-rich plasma). It also inhibits the adhesion of melanoma tumor cells on fibrinogen and fibronectin, by interfering with the function of alpha-V/beta-3 (ITGAV/ITGB3) and, to a lesser extent, with alpha-V/beta-6 (ITGAV/ITGB6) and alpha-5/beta-1 (ITGA5/ITGB1) integrins. This is Disintegrin-like leberagin-C from Macrovipera lebetina transmediterranea (Blunt-nosed viper).